Consider the following 942-residue polypeptide: Protein ZDS2 (942 aa).

Residues Met-1–Asn-28 are disordered. Residues Thr-15–Asn-28 are compositionally biased toward polar residues. Position 50 is a phosphoserine (Ser-50). 5 disordered regions span residues Ser-91–Ile-142, Ser-483–Asn-541, Val-617–Leu-654, Val-682–Thr-728, and Ser-788–Leu-817. Over residues Ser-99–Gln-122 the composition is skewed to basic and acidic residues. A compositionally biased stretch (acidic residues) spans Gly-123–Asp-134. Low complexity-rich tracts occupy residues Ser-483–Ser-497, Ser-518–Asn-541, and Val-617–Lys-627. The segment covering Val-682–Lys-704 has biased composition (basic residues). Polar residues predominate over residues Thr-807–Thr-816.

The protein to yeast ZDS1/NRC1/CES1. In terms of assembly, interacts with SKG6.

In terms of biological role, acts as a negative regulator of polarized growth via an alternative mechanism to ZDS1. In heat-stressed cells appears to play a role in localizing BCY1 to the cytoplasm. Seems to interact with, and down-regulate, CDC42. Also acts as a suppressor of PKC1. May act as an integration point for distinct signaling pathways helping to maintain a balance among these different pathways. In Saccharomyces cerevisiae (strain ATCC 204508 / S288c) (Baker's yeast), this protein is Protein ZDS2 (ZDS2).